The primary structure comprises 464 residues: Uronate isomerase (464 aa).

It belongs to the metallo-dependent hydrolases superfamily. Uronate isomerase family.

It catalyses the reaction D-glucuronate = D-fructuronate. The catalysed reaction is aldehydo-D-galacturonate = keto-D-tagaturonate. The protein operates within carbohydrate metabolism; pentose and glucuronate interconversion. The polypeptide is Uronate isomerase (Caldicellulosiruptor bescii (strain ATCC BAA-1888 / DSM 6725 / KCTC 15123 / Z-1320) (Anaerocellum thermophilum)).